Here is a 176-residue protein sequence, read N- to C-terminus: MDLPGPIHDFLLVFLGSGLILGGLGVVLLTNPIYSAFSLGLVFVCISLFYIPSNSHFVAAAQLLIYVGAINVLIIFAVMFMNGSEYYKDFNLWTVGDGVTSVVCTSIFASLITTILDTSWYGIIWTTRSNQIIEQDLISNSQQIGIHLSTDFFLPFELISIILLVALIGAIAVARQ.

Transmembrane regions (helical) follow at residues 10 to 30, 32 to 52, 61 to 81, 93 to 115, and 152 to 172; these read FLLVFLGSGLILGGLGVVLLT, PIYSAFSLGLVFVCISLFYIP, AQLLIYVGAINVLIIFAVMFM, WTVGDGVTSVVCTSIFASLITTI, and FFLPFELISIILLVALIGAIA.

It belongs to the complex I subunit 6 family. In terms of assembly, NDH is composed of at least 16 different subunits, 5 of which are encoded in the nucleus.

It localises to the plastid. The protein resides in the chloroplast thylakoid membrane. The enzyme catalyses a plastoquinone + NADH + (n+1) H(+)(in) = a plastoquinol + NAD(+) + n H(+)(out). It catalyses the reaction a plastoquinone + NADPH + (n+1) H(+)(in) = a plastoquinol + NADP(+) + n H(+)(out). Functionally, NDH shuttles electrons from NAD(P)H:plastoquinone, via FMN and iron-sulfur (Fe-S) centers, to quinones in the photosynthetic chain and possibly in a chloroplast respiratory chain. The immediate electron acceptor for the enzyme in this species is believed to be plastoquinone. Couples the redox reaction to proton translocation, and thus conserves the redox energy in a proton gradient. The chain is NAD(P)H-quinone oxidoreductase subunit 6, chloroplastic (ndhG) from Vitis vinifera (Grape).